We begin with the raw amino-acid sequence, 306 residues long: Mitochondrial 2-oxoglutarate/malate carrier protein (306 aa).

3 Solcar repeats span residues 7–95, 103–194, and 203–292; these read VPNV…LLER, LSFG…AKQA, and DGIF…MNAA. 6 consecutive transmembrane segments (helical) span residues 9–38, 72–93, 108–122, 172–192, 205–226, and 268–286; these read NVVK…NRMQ, SAGL…AFLL, KAVL…GSFV, PTVL…SQAK, IFCH…SMPV, and FTPY…FIIL.

This sequence belongs to the mitochondrial carrier (TC 2.A.29) family. Interacts with ant-1.1 and ced-9. In terms of tissue distribution, ubiquitously expressed, but highly expressed in the anterior pharynx.

Its subcellular location is the mitochondrion. The protein resides in the mitochondrion inner membrane. The enzyme catalyses (S)-malate(in) + 2-oxoglutarate(out) = (S)-malate(out) + 2-oxoglutarate(in). It catalyses the reaction malonate(in) + 2-oxoglutarate(out) = malonate(out) + 2-oxoglutarate(in). It carries out the reaction succinate(in) + 2-oxoglutarate(out) = succinate(out) + 2-oxoglutarate(in). The catalysed reaction is maleate(in) + 2-oxoglutarate(out) = maleate(out) + 2-oxoglutarate(in). The enzyme catalyses oxaloacetate(in) + 2-oxoglutarate(out) = oxaloacetate(out) + 2-oxoglutarate(in). Catalyzes the transport of 2-oxoglutarate (alpha-oxoglutarate) across the inner mitochondrial membrane in an electroneutral exchange for malate. Can also exchange 2-oxoglutarate for other dicarboxylic acids such as malonate, succinate, maleate and oxaloacetate, although with lower affinity. Contributes to several metabolic processes, including the malate-aspartate shuttle, the oxoglutarate/isocitrate shuttle, in gluconeogenesis from lactate, and in nitrogen metabolism. Maintains mitochondrial fusion and fission events, and the organization and morphology of cristae. Regulator of apoptosis, insulin secretion and germline proliferation. Furthermore, plays a role in the oxidative stress response regulating endogenous levels of reactive oxygen species (ROS). Involved in the regulation of lin-35/Rb-mediated apoptosis in the germline. This Caenorhabditis elegans protein is Mitochondrial 2-oxoglutarate/malate carrier protein.